The following is a 388-amino-acid chain: MSTDQEKIIKQVLDSIAEQQGDSRDDEVYVIEIMSLRFEKFDNRIKQKIERFTSLQMLTINDCLISDLTNFPHVPSLIRLDLVFNKITGDQLQYLRGSRHLQTLMLGANQIEEIEDLKRLGQMRELIQLDLLNNPVVNTNNYRNLVFNLFPSLVILDTLDKNGIDQEKAALDISASRVPDNLFDKSKPVQNVSKQVVKNAKATQNNLFSSTQKVAQVKQIPKIVPAKVSKPSQASVQDNKSNVVQAKVTAAVSVGRKAPASRNGGVPSKAGKGKMNAFSKQSTSQKSGLVFPCGRLRRYLKQACKQFRVSSSCNIYLAGVLEYLAAEVLETAGNIAKNNRLSRINPVHIREAFRNDAELNQFVNGTIIAEGGSTSTNFVLPIINKSKK.

LRR repeat units follow at residues 54-75 (SLQM…PHVP), 76-96 (SLIR…QYLR), and 100-121 (HLQT…KRLG). The LRRCT domain maps to 134 to 172 (NPVVNTNNYRNLVFNLFPSLVILDTLDKNGIDQEKAALD). Residues 256–279 (RKAPASRNGGVPSKAGKGKMNAFS) are disordered.

Belongs to the histone H2A family. As to quaternary structure, the nucleosome is a histone octamer containing two molecules each of H2A, H2B, H3 and H4 assembled in one H3-H4 heterotetramer and two H2A-H2B heterodimers. The octamer wraps approximately 147 bp of DNA.

The protein localises to the nucleus. Its subcellular location is the chromosome. Its function is as follows. Variant histone H2A which replaces conventional H2A in a subset of nucleosomes. Nucleosomes wrap and compact DNA into chromatin, limiting DNA accessibility to the cellular machineries which require DNA as a template. Histones thereby play a central role in transcription regulation, DNA repair, DNA replication and chromosomal stability. DNA accessibility is regulated via a complex set of post-translational modifications of histones, also called histone code, and nucleosome remodeling. The chain is Histone H2A.Y (HTAY) from Tetrahymena thermophila (strain SB210).